Reading from the N-terminus, the 197-residue chain is CRISPR system CMR subunit Cmr7 1 (197 aa).

This sequence belongs to the CRISPR system Cmr7 family. As to quaternary structure, possible homodimer. Part of the CMR ribonucleoprotein complex, consisting of crRNA plus Cmr1/Cmr2/Cmr3/Cmr4/Cmr5/Cmr6 at 1:1 and possibly 3 Cmr7 dimers. A Cmr2/Cmr3/Cmr7 subcomplex without crRNA can also be isolated. It does not cleave target RNA.

Its subcellular location is the cytoplasm. Functionally, CRISPR (clustered regularly interspaced short palindromic repeat) is an adaptive immune system that provides protection against mobile genetic elements (viruses, transposable elements and conjugative plasmids). CRISPR clusters contain spacers, sequences complementary to antecedent mobile elements, and target invading nucleic acids. CRISPR clusters are transcribed and processed into CRISPR RNA (crRNA). The CMR complex degrades RNA complementary to the crRNA (target RNA) within UA dinucleotides, generating 3'-OH and 5'-phosphate ends. Activity is dependent on the 8 nt long 5' tag in the crRNA, an unpaired 3' flag on the target RNA, and is stimulated by ATP. Some cleavage of the guide crRNA can also be observed. The protein is CRISPR system CMR subunit Cmr7 1 (cmr7A) of Saccharolobus solfataricus (strain ATCC 35092 / DSM 1617 / JCM 11322 / P2) (Sulfolobus solfataricus).